A 146-amino-acid chain; its full sequence is Protein archease (146 aa).

Residues D16, D145, and I146 each coordinate Ca(2+).

It belongs to the archease family.

In terms of biological role, activates the tRNA-splicing ligase complex by facilitating the enzymatic turnover of catalytic subunit RtcB. Acts by promoting the guanylylation of RtcB, a key intermediate step in tRNA ligation. Can also alter the NTP specificity of RtcB such that ATP, dGTP or ITP is used efficiently. The polypeptide is Protein archease (Methanosarcina barkeri (strain Fusaro / DSM 804)).